We begin with the raw amino-acid sequence, 641 residues long: Threonine--tRNA ligase (641 aa).

The region spanning 1–61 (MPAITLPDGS…DDDVQLEIVT (61 aa)) is the TGS domain. Residues 242–533 (DHRRIGRAQN…LIEHYAGALP (292 aa)) form a catalytic region. Zn(2+) is bound by residues Cys333, His384, and His510.

Belongs to the class-II aminoacyl-tRNA synthetase family. In terms of assembly, homodimer. Zn(2+) is required as a cofactor.

The protein localises to the cytoplasm. It carries out the reaction tRNA(Thr) + L-threonine + ATP = L-threonyl-tRNA(Thr) + AMP + diphosphate + H(+). Its function is as follows. Catalyzes the attachment of threonine to tRNA(Thr) in a two-step reaction: L-threonine is first activated by ATP to form Thr-AMP and then transferred to the acceptor end of tRNA(Thr). Also edits incorrectly charged L-seryl-tRNA(Thr). This Alkalilimnicola ehrlichii (strain ATCC BAA-1101 / DSM 17681 / MLHE-1) protein is Threonine--tRNA ligase.